The sequence spans 796 residues: Histone-lysine N-methyltransferase PRDM9 (796 aa).

Positions 1-23 (MSRTMNTNKPEENSTEGDAGKLE) are disordered. The region spanning 27–90 (KVKDEFKDIS…QRQAIKPQIN (64 aa)) is the KRAB-related domain. The segment at 149 to 172 (SEHAQKPVCSPEEGNTSGQHFGKK) is disordered. 4 residues coordinate Zn(2+): Cys-209, Cys-212, Cys-220, and His-223. One can recognise an SET domain in the interval 248–362 (PGLRIGPSGI…PGRELLVWYG (115 aa)). Residues 260–262 (AGL), Tyr-295, and 324–325 (NC) contribute to the S-adenosyl-L-methionine site. 292 to 298 (NSGYSWL) is a substrate binding site. Substrate is bound at residue Tyr-361. At Lys-372 the chain carries N6,N6,N6-trimethyllysine; alternate. Lys-372 is subject to N6-methyllysine; alternate. N6-methyllysine occurs at positions 376 and 378. The C2H2-type 1 zinc-finger motif lies at 392–415 (HPCFLCSLAFSSQKFLTQHVEWNH). The Zn(2+) site is built by Cys-394, Cys-397, His-410, and His-415. Positions 443 to 457 (FDSQNKNDKASNEVK) are enriched in basic and acidic residues. Residues 443 to 497 (FDSQNKNDKASNEVKRKSKPRHKWTRQRISTAFSSTLKEQMRSEESKRTVEEELR) form a disordered region. The span at 458 to 468 (RKSKPRHKWTR) shows a compositional bias: basic residues. The span at 469–480 (QRISTAFSSTLK) shows a compositional bias: polar residues. The span at 481–497 (EQMRSEESKRTVEEELR) shows a compositional bias: basic and acidic residues. Residues 522 to 540 (QCGQCFSDKSNVSEHQRTH) form a C2H2-type 2; degenerate zinc finger. 9 C2H2-type zinc fingers span residues 546 to 568 (YICR…QRTH), 574 to 596 (YICR…QRTH), 602 to 624 (YICR…QRTH), 630 to 652 (YICR…QRTH), 658 to 680 (YICR…QRTH), 686 to 708 (YICR…LRTH), 714 to 736 (YICR…QRTH), 742 to 764 (YICR…QRTH), and 770 to 792 (YICR…QRTH). Cys-716, Cys-719, His-732, His-736, Cys-744, Cys-747, His-760, His-764, Cys-772, Cys-775, His-788, and His-792 together coordinate Zn(2+).

The protein belongs to the class V-like SAM-binding methyltransferase superfamily. In terms of assembly, homodimer. Interacts with EHMT2 and CDYL; interaction only takes place when PRDM9 is bound to hotspot DNA. Interacts with CXXC1; this interaction does not link PRDM9-activated recombination hotspot sites with DSB machinery and is not required for the hotspot recognition pathway. Forms a complex with EWSR1, REC8, SYCP3 and SYCP1; complex formation is dependent of phosphorylated form of REC8 and requires PRDM9 bound to hotspot DNA; EWSR1 joins PRDM9 with the chromosomal axis through REC8. Mono-methylated; automethylated. Tri-methylated; automethylated. Mono-methylation is predominant; automethylation is lower and slower than H3 peptide methylation and is in a highest S-adenosyl-L-methionine concentration-dependent. There are two major sites for automethylation at Lys-372 and Lys-378. Lysines can be simultaneously methylated, such as Lys-372(me3)/Lys-376(me1), Lys-372(me1)/Lys-378(me1) and Lys-372(me1)/Lys-376(me1)/Lys-378(me1). Automethylation is an intramolecular (cis) process.

The protein localises to the nucleus. Its subcellular location is the chromosome. The enzyme catalyses L-lysyl-[protein] + S-adenosyl-L-methionine = N(6)-methyl-L-lysyl-[protein] + S-adenosyl-L-homocysteine + H(+). It carries out the reaction N(6)-methyl-L-lysyl-[protein] + S-adenosyl-L-methionine = N(6),N(6)-dimethyl-L-lysyl-[protein] + S-adenosyl-L-homocysteine + H(+). The catalysed reaction is L-lysyl(4)-[histone H3] + 3 S-adenosyl-L-methionine = N(6),N(6),N(6)-trimethyl-L-lysyl(4)-[histone H3] + 3 S-adenosyl-L-homocysteine + 3 H(+). It catalyses the reaction L-lysyl(36)-[histone H3] + 3 S-adenosyl-L-methionine = N(6),N(6),N(6)-trimethyl-L-lysyl(36)-[histone H3] + 3 S-adenosyl-L-homocysteine + 3 H(+). The enzyme catalyses L-lysyl(9)-[histone H3] + 3 S-adenosyl-L-methionine = N(6),N(6),N(6)-trimethyl-L-lysyl(9)-[histone H3] + 3 S-adenosyl-L-homocysteine + 3 H(+). It carries out the reaction L-lysyl(20)-[histone H4] + S-adenosyl-L-methionine = N(6)-methyl-L-lysyl(20)-[histone H4] + S-adenosyl-L-homocysteine + H(+). The catalysed reaction is N(6)-methyl-L-lysyl(20)-[histone H4] + S-adenosyl-L-methionine = N(6),N(6)-dimethyl-L-lysyl(20)-[histone H4] + S-adenosyl-L-homocysteine + H(+). Histone methyltransferase that sequentially mono-, di-, and tri-methylates both 'Lys-4' (H3K4) and 'Lys-36' (H3K36) of histone H3 to produce respectively trimethylated 'Lys-4' (H3K4me3) and trimethylated 'Lys-36' (H3K36me3) histone H3 and plays a key role in meiotic prophase by determining hotspot localization thereby promoting meiotic recombination. Can also methylate all four core histones with H3 being the best substrate and the most highly modified. Is also able, on one hand, to mono and di-methylate H4K20 and on other hand to trimethylate H3K9 with the di-methylated H3K9 as the best substrate. During meiotic prophase, binds specific DNA sequences through its zinc finger domains thereby determining hotspot localization where it promotes local H3K4me3 and H3K36me3 enrichment on the same nucleosomes through its histone methyltransferase activity. Thereby promotes double-stranded breaks (DSB) formation, at this subset of PRDM9-binding sites, that initiates meiotic recombination for the proper meiotic progression. During meiotic progression hotspot-bound PRDM9 interacts with several complexes; in early leptonema binds CDYL and EHMT2 followed by EWSR1 and CXXC1 by the end of leptonema. EWSR1 joins PRDM9 with the chromosomal axis through REC8. In this way, controls the DSB repair pathway, pairing of homologous chromosomes and sex body formation. Moreover plays a central role in the transcriptional activation of genes during early meiotic prophase thanks to H3K4me3 and H3K36me3 enrichment that represents a specific tag for epigenetic transcriptional activation. In addition performs automethylation. Acetylation and phosphorylation of histone H3 attenuate or prevent histone H3 methylation. The chain is Histone-lysine N-methyltransferase PRDM9 from Rattus norvegicus (Rat).